Reading from the N-terminus, the 140-residue chain is MGGGERYNIPDPQSRNASKNQEQQNRQKSKDQNSSQTKIAHKKKERGHGYNPAAAAWQAMQNGGKTKSLSNNSNWNAGLSSPSLLFKSQASQNYAGAKFSEPPSPSVLPKPPSHWVHVSLNPSDKETMTFQLKTLLKVQV.

The interval 1–81 (MGGGERYNIP…NSNWNAGLSS (81 aa)) is disordered. Composition is skewed to polar residues over residues 11–38 (DPQSRNASKNQEQQNRQKSKDQNSSQTK) and 59–81 (AMQNGGKTKSLSNNSNWNAGLSS). Residues 100–106 (SEPPSPS) carry the SH3-binding motif.

It belongs to the PNRC family. PNRC2 subfamily. In terms of assembly, interacts with UPF1/RENT1; preferentially interacts with hyperphosphorylated form. Interacts with DCP1A. Interacts with many nuclear receptors including ESR1, ESRRA, ESRRG, NR3C1/GR, NR5A1, PGR, TR, RAR and RXR. In terms of tissue distribution, strong expression is detected in lung, spleen, ovary, thymus, and colon.

It localises to the nucleus. The protein localises to the cytoplasm. Its subcellular location is the P-body. Functionally, involved in nonsense-mediated mRNA decay (NMD) by acting as a bridge between the mRNA decapping complex and the NMD machinery. May act by targeting the NMD machinery to the P-body and recruiting the decapping machinery to aberrant mRNAs. Required for UPF1/RENT1 localization to the P-body. Plays a role in glucocorticoid receptor-mediated mRNA degradation by interacting with the glucocorticoid receptor NR3C1 in a ligand-dependent manner when it is bound to the 5' UTR of target mRNAs and recruiting the RNA helicase UPF1 and the mRNA-decapping enzyme DCP1A, leading to RNA decay. Also acts as a nuclear receptor coactivator. May play a role in controlling the energy balance between energy storage and energy expenditure. In Mus musculus (Mouse), this protein is Proline-rich nuclear receptor coactivator 2 (Pnrc2).